The following is a 454-amino-acid chain: Asparagine--tRNA ligase (454 aa).

This sequence belongs to the class-II aminoacyl-tRNA synthetase family. As to quaternary structure, homodimer.

The protein resides in the cytoplasm. It carries out the reaction tRNA(Asn) + L-asparagine + ATP = L-asparaginyl-tRNA(Asn) + AMP + diphosphate + H(+). In Mycoplasma capricolum subsp. capricolum (strain California kid / ATCC 27343 / NCTC 10154), this protein is Asparagine--tRNA ligase.